A 330-amino-acid polypeptide reads, in one-letter code: Glycerol-3-phosphate dehydrogenase [NAD(P)+] (330 aa).

Residues tryptophan 11, arginine 33, and lysine 105 each contribute to the NADPH site. Residues lysine 105, glycine 133, and serine 135 each coordinate sn-glycerol 3-phosphate. Position 137 (alanine 137) interacts with NADPH. Residues lysine 188, aspartate 241, serine 251, arginine 252, and asparagine 253 each coordinate sn-glycerol 3-phosphate. Lysine 188 (proton acceptor) is an active-site residue. Arginine 252 is an NADPH binding site. NADPH is bound by residues valine 276 and glutamate 278.

This sequence belongs to the NAD-dependent glycerol-3-phosphate dehydrogenase family.

The protein resides in the cytoplasm. The catalysed reaction is sn-glycerol 3-phosphate + NAD(+) = dihydroxyacetone phosphate + NADH + H(+). It carries out the reaction sn-glycerol 3-phosphate + NADP(+) = dihydroxyacetone phosphate + NADPH + H(+). Its pathway is membrane lipid metabolism; glycerophospholipid metabolism. Catalyzes the reduction of the glycolytic intermediate dihydroxyacetone phosphate (DHAP) to sn-glycerol 3-phosphate (G3P), the key precursor for phospholipid synthesis. In Acidovorax ebreus (strain TPSY) (Diaphorobacter sp. (strain TPSY)), this protein is Glycerol-3-phosphate dehydrogenase [NAD(P)+].